The chain runs to 345 residues: S-adenosylmethionine:tRNA ribosyltransferase-isomerase (345 aa).

The protein belongs to the QueA family. Monomer.

It is found in the cytoplasm. It carries out the reaction 7-aminomethyl-7-carbaguanosine(34) in tRNA + S-adenosyl-L-methionine = epoxyqueuosine(34) in tRNA + adenine + L-methionine + 2 H(+). Its pathway is tRNA modification; tRNA-queuosine biosynthesis. Transfers and isomerizes the ribose moiety from AdoMet to the 7-aminomethyl group of 7-deazaguanine (preQ1-tRNA) to give epoxyqueuosine (oQ-tRNA). The chain is S-adenosylmethionine:tRNA ribosyltransferase-isomerase from Helicobacter acinonychis (strain Sheeba).